The chain runs to 461 residues: E3 ubiquitin-protein ligase TRIM15 (461 aa).

The RING-type zinc finger occupies 12 to 57 (CSDCQGRLEDAVTAACGHTFCRLCLPLPPQMGAQPSSRVLLCPVCQ). The segment at 74 to 115 (LGETYCEEHGEKIYFFCENDAEFLCVFCREGPSHQAHAVGFL) adopts a B box-type zinc-finger fold. Positions 79, 82, 101, and 107 each coordinate Zn(2+). A coiled-coil region spans residues 123 to 230 (RDRLRGRLEA…EKCQQPASEL (108 aa)). The B30.2/SPRY domain occupies 272–461 (EMLRAFSENL…KKGSCLTLKG (190 aa)).

This sequence belongs to the TRIM/RBCC family. As to quaternary structure, interacts with paxillin/PXN; this interaction recruits TRIM15 to focal adhesions. Interacts with TRIM8; this interaction prevents TRIM8 cytoplasmic translocation.

Its subcellular location is the cytoplasm. The protein resides in the nucleus. It is found in the cell junction. The protein localises to the focal adhesion. The enzyme catalyses S-ubiquitinyl-[E2 ubiquitin-conjugating enzyme]-L-cysteine + [acceptor protein]-L-lysine = [E2 ubiquitin-conjugating enzyme]-L-cysteine + N(6)-ubiquitinyl-[acceptor protein]-L-lysine.. Functionally, E3 ubiquitin ligase that plays a role in several processes including innate antiviral immnity, cell migration and chemotaxis. Acts as a 'Lys-63'-specific ubiquitin ligase for MAPK1/ERK2 and MAPK3/ERK1, promoting their activation by facilitating their interaction with MAP2K1 and MAP2K2. Also plays a role in cell migration and chemotaxis by acting as a stable focal adhesion component upon recruitment by multi-adapter protein paxillin/PXN. Functions in the RIGI-mediated interferon induction pathway upstream or at the level of MAVS. Inhibits NF-kappa-B activation by turnover of 'Lys-63'-linked ubiquitination of MAP3K7/TAK1. Mechanistically, prevents TRIM8 cytoplasmic translocation and thus inhibits TRIM8-mediated 'Lys-63'-linked polyubiquitination of MAP3K7/TAK1 in the cytoplasm. Also has an important regulatory effect on the activation of hepatic stellate cells (HSCs). The protein is E3 ubiquitin-protein ligase TRIM15 (TRIM15) of Sus scrofa (Pig).